A 319-amino-acid polypeptide reads, in one-letter code: tRNA uridine(34) hydroxylase (319 aa).

Residues 127-221 (KQEDTVIIDA…YGKDPEVQGE (95 aa)) form the Rhodanese domain. The active-site Cysteine persulfide intermediate is the Cys-181.

Belongs to the TrhO family.

It catalyses the reaction uridine(34) in tRNA + AH2 + O2 = 5-hydroxyuridine(34) in tRNA + A + H2O. Its function is as follows. Catalyzes oxygen-dependent 5-hydroxyuridine (ho5U) modification at position 34 in tRNAs. In Bacillus cereus (strain G9842), this protein is tRNA uridine(34) hydroxylase.